Reading from the N-terminus, the 217-residue chain is Thiamine-phosphate synthase (217 aa).

4-amino-2-methyl-5-(diphosphooxymethyl)pyrimidine is bound by residues 42 to 46 and Asp77; that span reads QFRDK. Mg(2+) is bound by residues Asp78 and Asp97. Ser117 serves as a coordination point for 4-amino-2-methyl-5-(diphosphooxymethyl)pyrimidine. 144–146 provides a ligand contact to 2-[(2R,5Z)-2-carboxy-4-methylthiazol-5(2H)-ylidene]ethyl phosphate; that stretch reads TIS. Residue Lys147 coordinates 4-amino-2-methyl-5-(diphosphooxymethyl)pyrimidine. Residues Gly175 and 195-196 each bind 2-[(2R,5Z)-2-carboxy-4-methylthiazol-5(2H)-ylidene]ethyl phosphate; that span reads IT.

This sequence belongs to the thiamine-phosphate synthase family. It depends on Mg(2+) as a cofactor.

The enzyme catalyses 2-[(2R,5Z)-2-carboxy-4-methylthiazol-5(2H)-ylidene]ethyl phosphate + 4-amino-2-methyl-5-(diphosphooxymethyl)pyrimidine + 2 H(+) = thiamine phosphate + CO2 + diphosphate. It carries out the reaction 2-(2-carboxy-4-methylthiazol-5-yl)ethyl phosphate + 4-amino-2-methyl-5-(diphosphooxymethyl)pyrimidine + 2 H(+) = thiamine phosphate + CO2 + diphosphate. It catalyses the reaction 4-methyl-5-(2-phosphooxyethyl)-thiazole + 4-amino-2-methyl-5-(diphosphooxymethyl)pyrimidine + H(+) = thiamine phosphate + diphosphate. It participates in cofactor biosynthesis; thiamine diphosphate biosynthesis; thiamine phosphate from 4-amino-2-methyl-5-diphosphomethylpyrimidine and 4-methyl-5-(2-phosphoethyl)-thiazole: step 1/1. Its function is as follows. Condenses 4-methyl-5-(beta-hydroxyethyl)thiazole monophosphate (THZ-P) and 2-methyl-4-amino-5-hydroxymethyl pyrimidine pyrophosphate (HMP-PP) to form thiamine monophosphate (TMP). This is Thiamine-phosphate synthase from Levilactobacillus brevis (strain ATCC 367 / BCRC 12310 / CIP 105137 / JCM 1170 / LMG 11437 / NCIMB 947 / NCTC 947) (Lactobacillus brevis).